The following is a 168-amino-acid chain: Peptidoglycan-associated lipoprotein (168 aa).

The first 24 residues, 1–24, serve as a signal peptide directing secretion; sequence MGRIAALTRNPVMIALVAMLAIAG. A lipid anchor (N-palmitoyl cysteine) is attached at Cys-25. A lipid anchor (S-diacylglycerol cysteine) is attached at Cys-25. One can recognise an OmpA-like domain in the interval 50 to 167; sequence AQDFTVNIGD…RAVTTLSGAG (118 aa).

The protein belongs to the Pal lipoprotein family. In terms of assembly, the Tol-Pal system is composed of five core proteins: the inner membrane proteins TolA, TolQ and TolR, the periplasmic protein TolB and the outer membrane protein Pal. They form a network linking the inner and outer membranes and the peptidoglycan layer.

The protein resides in the cell outer membrane. In terms of biological role, part of the Tol-Pal system, which plays a role in outer membrane invagination during cell division and is important for maintaining outer membrane integrity. The polypeptide is Peptidoglycan-associated lipoprotein (Mesorhizobium japonicum (strain LMG 29417 / CECT 9101 / MAFF 303099) (Mesorhizobium loti (strain MAFF 303099))).